Here is a 602-residue protein sequence, read N- to C-terminus: uncharacterized protein (602 aa).

Positions 51-210 (QYLGTQPRDF…PFVSYQPDAD (160 aa)) constitute a Helicase ATP-binding domain. The segment covering 430-439 (PHRESAHDPL) has biased composition (basic and acidic residues). 2 disordered regions span residues 430–452 (PHRE…TERG) and 518–538 (RAQL…ASVH). The segment covering 523–534 (KGATQPATSGAS) has biased composition (polar residues).

It to M.leprae ML1624.

This is an uncharacterized protein from Mycobacterium tuberculosis (strain ATCC 25618 / H37Rv).